Consider the following 100-residue polypeptide: Large ribosomal subunit protein uL23 (100 aa).

The protein belongs to the universal ribosomal protein uL23 family. Part of the 50S ribosomal subunit. Contacts protein L29, and trigger factor when it is bound to the ribosome.

Functionally, one of the early assembly proteins it binds 23S rRNA. One of the proteins that surrounds the polypeptide exit tunnel on the outside of the ribosome. Forms the main docking site for trigger factor binding to the ribosome. This is Large ribosomal subunit protein uL23 from Dechloromonas aromatica (strain RCB).